Reading from the N-terminus, the 347-residue chain is Fructose-1,6-bisphosphatase class 1 2 (347 aa).

Mg(2+) is bound by residues E92, D111, L113, and D114. Substrate contacts are provided by residues 114 to 117 (DGSS) and N202. E274 contributes to the Mg(2+) binding site.

Belongs to the FBPase class 1 family. Homotetramer. Requires Mg(2+) as cofactor.

The protein localises to the cytoplasm. The enzyme catalyses beta-D-fructose 1,6-bisphosphate + H2O = beta-D-fructose 6-phosphate + phosphate. It participates in carbohydrate biosynthesis; Calvin cycle. The sequence is that of Fructose-1,6-bisphosphatase class 1 2 from Bradyrhizobium sp. (strain BTAi1 / ATCC BAA-1182).